We begin with the raw amino-acid sequence, 322 residues long: Cytochrome c biogenesis protein CcsA (322 aa).

The next 8 membrane-spanning stretches (helical) occupy residues 17–37, 44–64, 71–91, 98–118, 143–163, 225–245, 258–273, and 286–306; these read VVSIVITIHLITLLVDEIVGL, GMIATFFCITGLLVTRWIYLG, LYESLIFLSWSFSIIHIVPYF, LSALTAPSAIFTQGFATSGLL, MVLGYAALLCGSLLSVALLVI, VISLGFLFLTIGILSGAVWAN, ETWAFITWTIFAIYLH, and AIVASMGFLIIWICYFGVNLL.

It belongs to the CcmF/CycK/Ccl1/NrfE/CcsA family. In terms of assembly, may interact with Ccs1.

It is found in the plastid. Its subcellular location is the chloroplast thylakoid membrane. Its function is as follows. Required during biogenesis of c-type cytochromes (cytochrome c6 and cytochrome f) at the step of heme attachment. This is Cytochrome c biogenesis protein CcsA from Vitis vinifera (Grape).